A 191-amino-acid chain; its full sequence is Abscisic acid receptor PYR1 (191 aa).

The START-like stretch occupies residues 23 to 176; the sequence is YQLDPGSCSS…NLQKLATVAE (154 aa). Lys59 is a binding site for abscisate. Phosphothreonine; by CARK1 is present on Thr78. The short motif at 85-89 is the Gate loop element; it reads SGLPA. Residues 89 to 94, 116 to 122, and Glu141 contribute to the abscisate site; these read ANTSTE and RLTNYKS. The Latch loop signature appears at 115-117; the sequence is HRL.

Belongs to the PYR/PYL/RCAR abscisic acid intracellular receptor family. In terms of assembly, homodimer. Binds ABA on one subunit only. Interacts with HAB1, AHG3, ABI1 and ABI2 when complexed to ABA, and possibly with other PP2Cs. Binds to CARs protein in an ABA-independent manner, both at the plasma membrane and in the nucleus. Interacts directly with CAR1 and CAR4. Interacts with CARK1 in the cytosol. Interacts with AIP1 in an abscisic acid-dependent manner. Interacts with FREE1 (via N-terminus). Interacts with the E3 ubiquitin-protein ligase RSL1 at the plasma membrane. Post-translationally, ubiquitynated and degraded by the proteasome upon binding to the E3 ubiquitin-protein ligase RSL1 at the plasma membrane. Phosphorylated by CARK1 especially in response to abscisic acid (ABA); this phosphorylation promotes its stability and inhibitory ability to ABI1.

Its subcellular location is the cytoplasm. It localises to the cytosol. The protein resides in the nucleus. The protein localises to the cell membrane. It is found in the vacuole. In terms of biological role, receptor for abscisic acid (ABA) required for ABA-mediated responses such as stomatal closure and germination inhibition. Inhibits the activity of group-A protein phosphatases type 2C (PP2Cs) when activated by ABA. Can be activated by both (-)-ABA and (+)-ABA. Promotes drought tolerance. This Arabidopsis thaliana (Mouse-ear cress) protein is Abscisic acid receptor PYR1.